Consider the following 929-residue polypeptide: Diacylglycerol kinase zeta (929 aa).

The segment covering 1-14 (MEPRDPSPEARSSD) has biased composition (basic and acidic residues). 2 disordered regions span residues 1-46 (MEPR…RRFP) and 59-80 (KSGLQHLAPPPPTPGAPCGESE). Residues 15–24 (SESASASSSG) show a composition bias toward low complexity. Over residues 25–37 (SERDADPEPDKAP) the composition is skewed to basic and acidic residues. Phorbol-ester/DAG-type zinc fingers lie at residues 98–153 (HIWF…NFRC) and 173–231 (HHWV…EEPC). Residues 257 to 281 (KASKKKKRASFKRRSSKKGPEEGRW) form a disordered region. The span at 258–273 (ASKKKKRASFKRRSSK) shows a compositional bias: basic residues. Residues 279 to 417 (GRWRPFIIRP…HVEEGNVVQL (139 aa)) form a mediates interaction with RASGRP1 region. In terms of domain architecture, DAGKc spans 292–426 (PLMKPLLVFV…LDRWDLRAEP (135 aa)). Residues 362-370 (LSTLDQLRL) carry the Nuclear export signal motif. Residues 421 to 441 (DLRAEPNPEAGPEERDDGATD) are disordered. At Ser706 the chain carries Phosphoserine. Residues 760–783 (ARPDLPTPTSPLPASPCSPTPGSL) are disordered. Residues 764–778 (LPTPTSPLPASPCSP) are compositionally biased toward pro residues. Ser782 carries the post-translational modification Phosphoserine. ANK repeat units lie at residues 823–853 (QSRTLLHHAVSTGSKEVVRYLLDHAPPEILD) and 858–887 (NGETCLHQAAALGQRTICHYIVEAGASLMK). A PDZ-binding motif is present at residues 925–929 (QETAV).

Belongs to the eukaryotic diacylglycerol kinase family. Interacts (via PDZ-binding motif) with the PDZ domain of the syntrophin SNTG1 and that of SNX27. Interacts with IRS1 in the absence of insulin; insulin stimulation decreases this interaction. Found in a ternary complex with IRS1 and PIP5K1A in the absence of insulin. Interacts with PIP5K1A. Forms a signaling complex with RASGRP1 and HRAS.

It localises to the nucleus. The protein resides in the cytoplasm. The protein localises to the cytosol. It is found in the cell membrane. Its subcellular location is the cell projection. It localises to the lamellipodium. It carries out the reaction a 1,2-diacyl-sn-glycerol + ATP = a 1,2-diacyl-sn-glycero-3-phosphate + ADP + H(+). It catalyses the reaction a 1-O-alkyl-sn-glycerol + ATP = a 1-O-alkyl-sn-glycero-3-phosphate + ADP + H(+). The enzyme catalyses 1-O-alkyl-2-acyl-sn-glycerol + ATP = 1-O-alkyl-2-acyl-sn-glycero-3-phosphate + ADP + H(+). The catalysed reaction is 1,2-didecanoyl-sn-glycerol + ATP = 1,2-didecanoyl-sn-glycero-3-phosphate + ADP + H(+). It carries out the reaction 1,2-ditetradecanoyl-sn-glycerol + ATP = 1,2-ditetradecanoyl-sn-glycero-3-phosphate + ADP + H(+). It catalyses the reaction 1-hexadecanoyl-2-(9Z-octadecenoyl)-sn-glycerol + ATP = 1-hexadecanoyl-2-(9Z-octadecenoyl)-sn-glycero-3-phosphate + ADP + H(+). The enzyme catalyses 1-hexadecanoyl-2-(5Z,8Z,11Z,14Z-eicosatetraenoyl)-sn-glycerol + ATP = 1-hexadecanoyl-2-(5Z,8Z,11Z,14Z-eicosatetraenoyl)-sn-glycero-3-phosphate + ADP + H(+). The catalysed reaction is 1-octadecanoyl-2-(9Z-octadecenoyl)-sn-glycerol + ATP = 1-octadecanoyl-2-(9Z-octadecenoyl)-sn-glycero-3-phosphate + ADP + H(+). It carries out the reaction 1-octadecanoyl-2-(5Z,8Z,11Z,14Z-eicosatetraenoyl)-sn-glycerol + ATP = 1-octadecanoyl-2-(5Z,8Z,11Z,14Z-eicosatetraenoyl)-sn-glycero-3-phosphate + ADP + H(+). It catalyses the reaction 1-octadecanoyl-2-(4Z,7Z,10Z,13Z,16Z,19Z-docosahexaenoyl)-sn-glycerol + ATP = 1-octadecanoyl-2-(4Z,7Z,10Z,13Z,16Z,19Z-docosahexaenoyl)-sn-glycero-3-phosphate + ADP + H(+). The enzyme catalyses 1,2-di-(9Z-octadecenoyl)-sn-glycerol + ATP = 1,2-di-(9Z-octadecenoyl)-sn-glycero-3-phosphate + ADP + H(+). The catalysed reaction is 1-(9Z-octadecenoyl)-2-hexadecanoyl-sn-glycerol + ATP = 1-(9Z)-octadecenoyl-2-hexadecanoyl-sn-glycero-3-phosphate + ADP + H(+). It carries out the reaction 1-eicosanoyl-2-(5Z,8Z,11Z,14Z)-eicosatetraenoyl-sn-glycerol + ATP = 1-eicosanoyl-2-(5Z,8Z,11Z,14Z)-eicosatetraenoyl-sn-glycero-3-phosphate + ADP + H(+). It catalyses the reaction 1,2-di-(5Z,8Z,11Z,14Z)-eicosatetraenoyl-sn-glycerol + ATP = 1,2-di-(5Z,8Z,11Z,14Z)-eicosatetraenoyl-sn-glycero-3-phosphate + ADP + H(+). The enzyme catalyses 1-O-hexadecyl-2-acetyl-sn-glycerol + ATP = 1-O-hexadecyl-2-acetyl-sn-glycero-3-phosphate + ADP + H(+). The catalysed reaction is 1-O-hexadecyl-2-(5Z,8Z,11Z,14Z-eicosatetraenoyl)-sn-glycerol + ATP = 1-O-hexadecyl-2-(5Z,8Z,11Z,14Z-eicosatetraenoyl)-sn-glycero-3-phosphate + ADP + H(+). It carries out the reaction 1-O-hexadecyl-2-(9Z-octadecenoyl)-sn-glycerol + ATP = 1-O-hexadecyl-2-(9Z-octadecenoyl)-sn-glycero-3-phosphate + ADP + H(+). It catalyses the reaction 1-O-hexadecyl-sn-glycerol + ATP = 1-O-hexadecyl-sn-glycero-3-phosphate + ADP + H(+). It participates in lipid metabolism; glycerolipid metabolism. Diacylglycerol kinase that converts diacylglycerol/DAG into phosphatidic acid/phosphatidate/PA and regulates the respective levels of these two bioactive lipids. Thereby, acts as a central switch between the signaling pathways activated by these second messengers with different cellular targets and opposite effects in numerous biological processes. Also plays an important role in the biosynthesis of complex lipids. Does not exhibit an acyl chain-dependent substrate specificity among diacylglycerol species. Can also phosphorylate 1-alkyl-2-acylglycerol in vitro but less efficiently and with a preference for alkylacylglycerols containing an arachidonoyl group. The biological processes it is involved in include T cell activation since it negatively regulates T-cell receptor signaling which is in part mediated by diacylglycerol. By generating phosphatidic acid, stimulates PIP5KIA activity which regulates actin polymerization. Through the same mechanism could also positively regulate insulin-induced translocation of SLC2A4 to the cell membrane. Regulates RASGRP1 activity. The protein is Diacylglycerol kinase zeta of Rattus norvegicus (Rat).